Here is a 272-residue protein sequence, read N- to C-terminus: Phosphate import ATP-binding protein PstB 1 (272 aa).

One can recognise an ABC transporter domain in the interval 26–267; the sequence is LEIRNLDLRY…PKKRKTEDYI (242 aa). 58–65 contacts ATP; that stretch reads GPSGCGKS.

The protein belongs to the ABC transporter superfamily. Phosphate importer (TC 3.A.1.7) family. The complex is composed of two ATP-binding proteins (PstB), two transmembrane proteins (PstC and PstA) and a solute-binding protein (PstS).

It localises to the cell inner membrane. It carries out the reaction phosphate(out) + ATP + H2O = ADP + 2 phosphate(in) + H(+). Its function is as follows. Part of the ABC transporter complex PstSACB involved in phosphate import. Responsible for energy coupling to the transport system. The protein is Phosphate import ATP-binding protein PstB 1 of Shewanella oneidensis (strain ATCC 700550 / JCM 31522 / CIP 106686 / LMG 19005 / NCIMB 14063 / MR-1).